A 425-amino-acid polypeptide reads, in one-letter code: UPF0761 membrane protein xcc-b100_3490 (425 aa).

The next 6 membrane-spanning stretches (helical) occupy residues 48–68 (VFAL…FPAF), 105–125 (FTVA…HSIE), 154–174 (GTML…LPLF), 182–202 (LAEF…IVLI), 216–236 (ALPG…GFGF), and 250–270 (ALSA…SVLL).

It belongs to the UPF0761 family.

Its subcellular location is the cell inner membrane. This Xanthomonas campestris pv. campestris (strain B100) protein is UPF0761 membrane protein xcc-b100_3490.